A 231-amino-acid polypeptide reads, in one-letter code: 2,3-bisphosphoglycerate-dependent phosphoglycerate mutase (231 aa).

Residues 10 to 17 (RHGQSEWN), 23 to 24 (TG), arginine 62, 89 to 92 (ERHY), lysine 100, 116 to 117 (RR), and 185 to 186 (GN) contribute to the substrate site. Residue histidine 11 is the Tele-phosphohistidine intermediate of the active site. Glutamate 89 serves as the catalytic Proton donor/acceptor.

This sequence belongs to the phosphoglycerate mutase family. BPG-dependent PGAM subfamily. Homodimer.

It carries out the reaction (2R)-2-phosphoglycerate = (2R)-3-phosphoglycerate. It functions in the pathway carbohydrate degradation; glycolysis; pyruvate from D-glyceraldehyde 3-phosphate: step 3/5. In terms of biological role, catalyzes the interconversion of 2-phosphoglycerate and 3-phosphoglycerate. The protein is 2,3-bisphosphoglycerate-dependent phosphoglycerate mutase of Buchnera aphidicola subsp. Acyrthosiphon pisum (strain APS) (Acyrthosiphon pisum symbiotic bacterium).